The sequence spans 506 residues: 2-isopropylmalate synthase (506 aa).

Positions 4–266 constitute a Pyruvate carboxyltransferase domain; that stretch reads ILFMDTTLRD…EPSITLKEIK (263 aa). Residues aspartate 13, histidine 201, histidine 203, and asparagine 237 each contribute to the Mn(2+) site. Residues 390–506 are regulatory domain; the sequence is NITQLQVHFV…KLKSFIQLVK (117 aa).

The protein belongs to the alpha-IPM synthase/homocitrate synthase family. LeuA type 1 subfamily. In terms of assembly, homodimer. The cofactor is Mn(2+).

It localises to the cytoplasm. The catalysed reaction is 3-methyl-2-oxobutanoate + acetyl-CoA + H2O = (2S)-2-isopropylmalate + CoA + H(+). It participates in amino-acid biosynthesis; L-leucine biosynthesis; L-leucine from 3-methyl-2-oxobutanoate: step 1/4. Catalyzes the condensation of the acetyl group of acetyl-CoA with 3-methyl-2-oxobutanoate (2-ketoisovalerate) to form 3-carboxy-3-hydroxy-4-methylpentanoate (2-isopropylmalate). In Bacillus thuringiensis subsp. konkukian (strain 97-27), this protein is 2-isopropylmalate synthase.